We begin with the raw amino-acid sequence, 446 residues long: Histidine--tRNA ligase (446 aa).

This sequence belongs to the class-II aminoacyl-tRNA synthetase family. In terms of assembly, homodimer.

It is found in the cytoplasm. It catalyses the reaction tRNA(His) + L-histidine + ATP = L-histidyl-tRNA(His) + AMP + diphosphate + H(+). The polypeptide is Histidine--tRNA ligase (Burkholderia cenocepacia (strain HI2424)).